The sequence spans 188 residues: V-type ATP synthase subunit E (188 aa).

Belongs to the V-ATPase E subunit family.

Its function is as follows. Produces ATP from ADP in the presence of a proton gradient across the membrane. The chain is V-type ATP synthase subunit E from Thermus thermophilus (strain ATCC BAA-163 / DSM 7039 / HB27).